The primary structure comprises 372 residues: GTPase Obg (372 aa).

The 159-residue stretch at M1–L159 folds into the Obg domain. The tract at residues L128–G147 is disordered. The region spanning A160–V334 is the OBG-type G domain. GTP contacts are provided by residues G166 to S173, F191 to A195, D213 to G216, N284 to D287, and S315 to L317. Mg(2+) is bound by residues S173 and T193.

It belongs to the TRAFAC class OBG-HflX-like GTPase superfamily. OBG GTPase family. As to quaternary structure, monomer. The cofactor is Mg(2+).

The protein resides in the cytoplasm. Functionally, an essential GTPase which binds GTP, GDP and possibly (p)ppGpp with moderate affinity, with high nucleotide exchange rates and a fairly low GTP hydrolysis rate. Plays a role in control of the cell cycle, stress response, ribosome biogenesis and in those bacteria that undergo differentiation, in morphogenesis control. The sequence is that of GTPase Obg from Burkholderia mallei (strain NCTC 10247).